A 552-amino-acid chain; its full sequence is MAGUK p55 subfamily member 2 (552 aa).

L27 domains lie at 8–59 (SESA…EETK) and 60–118 (LEAV…YETP). Ser-42 is subject to Phosphoserine. Thr-117 carries the phosphothreonine modification. At Ser-121 the chain carries Phosphoserine. Residues 140 to 219 (MVGIRKTAGE…SVILKILPSY (80 aa)) form the PDZ domain. The SH3 domain occupies 225–293 (PRQVFVKCHF…PSQLLEEKRK (69 aa)). Residues 350–537 (RKTLVLIGAQ…TFRELQTAME (188 aa)) enclose the Guanylate kinase-like domain.

The protein belongs to the MAGUK family. As to quaternary structure, can homomultimerise. Interacts with CACNG2. Interacts (via the SH3-Guanylate kinase-like sub-module) with DLG4/PSD95 and DLGAP1/GKAP. Interacts (via the PDZ domain) with CADM1 (via C-terminus). Interacts with KCNN2/SK2 (via N-terminal domain). Interacts with SRC. In terms of processing, phosphorylated by SRC. In terms of tissue distribution, expressed in hippocampal neurons.

Its subcellular location is the cell projection. It is found in the dendrite. The protein localises to the postsynaptic density. The protein resides in the cytoplasm. It localises to the cytoskeleton. Its subcellular location is the membrane. Functionally, postsynaptic MAGUK scaffold protein that links CADM1 cell adhesion molecules to core components of the postsynaptic density. In CA1 pyramidal neurons, required for synaptic KCNN2-containing channel function and long-term potentiation expression. Seems to negatively regulate SRC function in epithelial cells. This is MAGUK p55 subfamily member 2 from Rattus norvegicus (Rat).